The primary structure comprises 347 residues: GMP reductase (347 aa).

108 to 131 (AEFEKVKKIMALSEEFVFICIDIA) serves as a coordination point for NADP(+). Gly181 and Gly183 together coordinate K(+). Cys186 serves as the catalytic Thioimidate intermediate. Position 216–239 (216–239 (IIGDGGCSCAGDVSKAFGGGADFV)) interacts with NADP(+).

Belongs to the IMPDH/GMPR family. GuaC type 1 subfamily. Homotetramer.

The catalysed reaction is IMP + NH4(+) + NADP(+) = GMP + NADPH + 2 H(+). Catalyzes the irreversible NADPH-dependent deamination of GMP to IMP. It functions in the conversion of nucleobase, nucleoside and nucleotide derivatives of G to A nucleotides, and in maintaining the intracellular balance of A and G nucleotides. The sequence is that of GMP reductase from Vibrio atlanticus (strain LGP32) (Vibrio splendidus (strain Mel32)).